The sequence spans 224 residues: Redox-sensing transcriptional repressor Rex (224 aa).

The H-T-H motif DNA-binding region spans 17 to 56 (RYHRYLEELLKNDVKRISSRELSEKMGVTASQIRQDLNNF). 91–96 (GAGNLG) is an NAD(+) binding site.

Belongs to the transcriptional regulatory Rex family. In terms of assembly, homodimer.

The protein resides in the cytoplasm. Modulates transcription in response to changes in cellular NADH/NAD(+) redox state. This Thermoanaerobacter sp. (strain X514) protein is Redox-sensing transcriptional repressor Rex.